The chain runs to 454 residues: F-box protein At1g67130 (454 aa).

The region spanning G4–R53 is the F-box domain.

This Arabidopsis thaliana (Mouse-ear cress) protein is F-box protein At1g67130.